Reading from the N-terminus, the 212-residue chain is RNA chaperone ProQ (212 aa).

The tract at residues glutamine 107 to valine 153 is disordered. The segment covering glutamine 117 to lysine 126 has biased composition (low complexity). The span at threonine 127–lysine 141 shows a compositional bias: basic residues.

This sequence belongs to the ProQ family.

The protein resides in the cytoplasm. Functionally, RNA chaperone with significant RNA binding, RNA strand exchange and RNA duplexing activities. The chain is RNA chaperone ProQ from Shewanella halifaxensis (strain HAW-EB4).